Here is a 109-residue protein sequence, read N- to C-terminus: Globin (109 aa).

The 107-residue stretch at 3–109 folds into the Globin domain; it reads PLTAAEVSSL…IFPIAGIHAL (107 aa).

Belongs to the globin family. As to quaternary structure, monomer.

Functionally, oxygen binding protein. The polypeptide is Globin (Dicrocoelium dendriticum (Small liver fluke)).